The primary structure comprises 369 residues: Uroporphyrinogen decarboxylase (369 aa).

Substrate contacts are provided by residues 36–40 (RQAGR), Asp86, Tyr162, Ser217, and His342.

Belongs to the uroporphyrinogen decarboxylase family. In terms of assembly, homodimer.

The protein resides in the cytoplasm. It carries out the reaction uroporphyrinogen III + 4 H(+) = coproporphyrinogen III + 4 CO2. It participates in porphyrin-containing compound metabolism; protoporphyrin-IX biosynthesis; coproporphyrinogen-III from 5-aminolevulinate: step 4/4. Catalyzes the decarboxylation of four acetate groups of uroporphyrinogen-III to yield coproporphyrinogen-III. The polypeptide is Uroporphyrinogen decarboxylase (Albidiferax ferrireducens (strain ATCC BAA-621 / DSM 15236 / T118) (Rhodoferax ferrireducens)).